Consider the following 429-residue polypeptide: Trigger factor (429 aa).

The PPIase FKBP-type domain maps to 161–246 (EDRVTIDFTG…LKKVEERELP (86 aa)).

Belongs to the FKBP-type PPIase family. Tig subfamily. As to quaternary structure, homodimer and monomer. In vivo most of the ribosomes are in complex with monomeric TF. Uncomplexed TF, however, is in a monomer-dimer equilibrium with approximately two thirds of TF existing in a dimeric state.

The protein resides in the cytoplasm. It carries out the reaction [protein]-peptidylproline (omega=180) = [protein]-peptidylproline (omega=0). Functionally, involved in protein export. Acts as a chaperone by maintaining the newly synthesized protein in an open conformation. Functions as a peptidyl-prolyl cis-trans isomerase. This is Trigger factor from Escherichia coli O45:K1 (strain S88 / ExPEC).